The chain runs to 1430 residues: 3'-5' RNA helicase YTHDC2 (1430 aa).

The disordered stretch occupies residues 1–37 (MSRPSSVSPRQPAPGGGGGGGPSPCGPGGGGRAKGLK). Over residues 14 to 33 (PGGGGGGGPSPCGPGGGGRA) the composition is skewed to gly residues. One can recognise an R3H domain in the interval 38–106 (DIRIDEEVKI…NRYLTVKKKD (69 aa)). A Helicase ATP-binding domain is found at 203–369 (VKIIKENKVV…FGSCPVIYIQ (167 aa)). ATP is bound at residue 216–223 (GETGSGKT). Positions 316–319 (DEVH) match the DEAH box motif. 2 ANK repeats span residues 506 to 538 (TSATALMVAAGRGFASQVEQLISMGANVHSKAS) and 539 to 571 (NGWMALDWAKHFGQTEIVDLLESYSASLEFGNL). The Helicase C-terminal domain occupies 612–784 (LLYNICHSCD…ELCLHTKLLA (173 aa)). Phosphoserine is present on residues S1089, S1090, and S1092. The segment covering 1164–1174 (EQSAGLQQPSG) has biased composition (polar residues). A disordered region spans residues 1164-1288 (EQSAGLQQPS…SPSPRPNMPV (125 aa)). Residues 1191–1200 (SSWRSNNSRK) are compositionally biased toward low complexity. Residue S1202 is modified to Phosphoserine. The segment covering 1231 to 1249 (KYKDRGILHPKRGTEDRSD) has biased composition (basic and acidic residues). Positions 1250–1264 (QSSVKSTDSSSYPSP) are enriched in low complexity. Residues S1263, S1267, and S1281 each carry the phosphoserine modification. The YTH domain occupies 1288-1418 (VRYFIMKSSN…QVGEQLLQLW (131 aa)). RNA-binding positions include 1294 to 1296 (KSS), W1310, and W1360.

Belongs to the DEAD box helicase family. DEAH subfamily. As to quaternary structure, interacts with MEIOC; binds transcripts that regulate the mitotic cell cycle inhibiting progression into metaphase, thereby allowing meiotic prophase to proceed normally. Interacts (via ANK repeats) with XRN1. Interacts with ZCCHC4. Associates with the small ribosomal subunit. Interacts with RBM46.

The protein resides in the cytoplasm. It localises to the perinuclear region. It catalyses the reaction ATP + H2O = ADP + phosphate + H(+). 3'-5' RNA helicase that plays a key role in the male and female germline by promoting transition from mitotic to meiotic divisions in stem cells. Specifically recognizes and binds N6-methyladenosine (m6A)-containing RNAs, a modification present at internal sites of mRNAs and some non-coding RNAs that plays a role in the efficiency of RNA processing and stability. Essential for ensuring a successful progression of the meiotic program in the germline by regulating the level of m6A-containing RNAs. Acts by binding and promoting degradation of m6A-containing mRNAs: the 3'-5' RNA helicase activity is required for this process and RNA degradation may be mediated by XRN1 exoribonuclease. Required for both spermatogenesis and oogenesis. The sequence is that of 3'-5' RNA helicase YTHDC2 from Pongo abelii (Sumatran orangutan).